The sequence spans 745 residues: 5-methyltetrahydropteroyltriglutamate--homocysteine methyltransferase (745 aa).

5-methyltetrahydropteroyltri-L-glutamate-binding residues include lysine 19 and asparagine 115. Residues 420-422 (IGS) and glutamate 473 contribute to the L-homocysteine site. L-methionine contacts are provided by residues 420-422 (IGS) and glutamate 473. Residues aspartate 478, tyrosine 501, 504–505 (RA), and tryptophan 550 contribute to the 5-methyltetrahydropteroyltri-L-glutamate site. Residue aspartate 588 coordinates L-homocysteine. Aspartate 588 contributes to the L-methionine binding site. Zn(2+) is bound by residues histidine 630, cysteine 632, and glutamate 654. The Proton donor role is filled by histidine 683. Cysteine 715 is a binding site for Zn(2+).

This sequence belongs to the vitamin-B12 independent methionine synthase family. Zn(2+) serves as cofactor.

The catalysed reaction is 5-methyltetrahydropteroyltri-L-glutamate + L-homocysteine = tetrahydropteroyltri-L-glutamate + L-methionine. Its pathway is amino-acid biosynthesis; L-methionine biosynthesis via de novo pathway; L-methionine from L-homocysteine (MetE route): step 1/1. Catalyzes the transfer of a methyl group from 5-methyltetrahydrofolate to homocysteine resulting in methionine formation. This Streptococcus mutans serotype c (strain ATCC 700610 / UA159) protein is 5-methyltetrahydropteroyltriglutamate--homocysteine methyltransferase.